The chain runs to 245 residues: Tetrahydromethanopterin S-methyltransferase subunit A 1 (245 aa).

Residues 1–222 (MADKKPAADN…AGNYSGKVQG (222 aa)) lie on the Cytoplasmic side of the membrane. A 5-hydroxybenzimidazolylcob(I)amide-binding site is contributed by His84. The chain crosses the membrane as a helical span at residues 223 to 243 (IMIGLIFTLVIGFLLLMAPLL). The Extracellular segment spans residues 244-245 (GA).

Belongs to the MtrA family. In terms of assembly, the complex is composed of 8 subunits; MtrA, MtrB, MtrC, MtrD, MtrE, MtrF, MtrG and MtrH. 5-hydroxybenzimidazolylcob(I)amide is required as a cofactor.

Its subcellular location is the cell membrane. The catalysed reaction is 5-methyl-5,6,7,8-tetrahydromethanopterin + coenzyme M + 2 Na(+)(in) = 5,6,7,8-tetrahydromethanopterin + methyl-coenzyme M + 2 Na(+)(out). Its pathway is one-carbon metabolism; methanogenesis from CO(2); methyl-coenzyme M from 5,10-methylene-5,6,7,8-tetrahydromethanopterin: step 2/2. Its function is as follows. Part of a complex that catalyzes the formation of methyl-coenzyme M and tetrahydromethanopterin from coenzyme M and methyl-tetrahydromethanopterin. This is an energy-conserving, sodium-ion translocating step. This is Tetrahydromethanopterin S-methyltransferase subunit A 1 from Methanobrevibacter ruminantium (strain ATCC 35063 / DSM 1093 / JCM 13430 / OCM 146 / M1) (Methanobacterium ruminantium).